Here is a 127-residue protein sequence, read N- to C-terminus: DNA-directed RNA polymerase subunit omega (127 aa).

The protein belongs to the RNA polymerase subunit omega family. In terms of assembly, the RNAP catalytic core consists of 2 alpha, 1 beta, 1 beta' and 1 omega subunit. When a sigma factor is associated with the core the holoenzyme is formed, which can initiate transcription.

The enzyme catalyses RNA(n) + a ribonucleoside 5'-triphosphate = RNA(n+1) + diphosphate. Promotes RNA polymerase assembly. Latches the N- and C-terminal regions of the beta' subunit thereby facilitating its interaction with the beta and alpha subunits. This chain is DNA-directed RNA polymerase subunit omega, found in Rickettsia peacockii (strain Rustic).